Consider the following 180-residue polypeptide: Amnesiac neuropeptides (180 aa).

The first 32 residues, Met-1–Ala-32, serve as a signal peptide directing secretion. 2 consecutive propeptides follow at residues Leu-33–Arg-35 and Gly-152–Arg-180. Positions Ser-155–Arg-180 are disordered.

Enriched expression in the embryonic and larval nervous systems. Strongly expressed in two large neurons that project over all the lobes of the mushroom bodies.

The protein localises to the secreted. Functionally, required for associative learning and memory in adults. Expression pattern suggests a modulatory role in memory formation. Controls neurotransmitter-mediated signaling pathways associated with the structure of the larval peripheral nerve. The chain is Amnesiac neuropeptides (amn) from Drosophila melanogaster (Fruit fly).